We begin with the raw amino-acid sequence, 211 residues long: N-(5'-phosphoribosyl)anthranilate isomerase (211 aa).

This sequence belongs to the TrpF family.

It carries out the reaction N-(5-phospho-beta-D-ribosyl)anthranilate = 1-(2-carboxyphenylamino)-1-deoxy-D-ribulose 5-phosphate. It participates in amino-acid biosynthesis; L-tryptophan biosynthesis; L-tryptophan from chorismate: step 3/5. The polypeptide is N-(5'-phosphoribosyl)anthranilate isomerase (Nitrosomonas europaea (strain ATCC 19718 / CIP 103999 / KCTC 2705 / NBRC 14298)).